A 75-amino-acid chain; its full sequence is MIRRSCALLSSSWRDHGISYLKYLNVCTETLHSTVKESRRAKYERWSKPCYTAQRPDGAGGQETIDKVPIHTKDY.

Residues 1–9 constitute a mitochondrion transit peptide; that stretch reads MIRRSCALL.

It belongs to the eukaryotic ATPase epsilon family. In terms of assembly, F-type ATPases have 2 components, F(1) - the catalytic core - and F(o) - the membrane proton channel. F(1) has five subunits: alpha(3), beta(3), gamma(1), delta(1), epsilon(1), plus the additional subunit P18 (Tb427.05.1710) that is not present in F(1)F(o) ATP synthase from metazoa. Subunit P18 (Tb927.5.1710) interacts with the alpha subunit with a 1:1 stoichiometry; the interaction is direct. Subunit gamma is part of the central stalk. F(o) has three main subunits: a, b and c. The trypanosomal ATPase complex contains additional subunits that are not present in the F(1)F(o) ATP synthase from metazoa.

The protein localises to the mitochondrion. The protein resides in the mitochondrion inner membrane. In terms of biological role, mitochondrial membrane ATP synthase (F(1)F(o) ATP synthase) produces ATP from ADP in the presence of a proton gradient across the membrane which is generated by electron transport complexes of the respiratory chain. F-type ATPases consist of two structural domains, F(1) - containing the extramembraneous catalytic core, and F(o) - containing the membrane proton channel, linked together by a central stalk and a peripheral stalk. During catalysis, ATP synthesis in the catalytic domain of F(1) is coupled via a rotary mechanism of the central stalk subunits to proton translocation. Subunits alpha and beta form the catalytic core in F(1). Rotation of the central stalk against the surrounding alpha(3)beta(3) subunits leads to hydrolysis of ATP in three separate catalytic sites on the beta subunits. Contrary to the procyclic, insect form that requires F(1)F(o) ATP synthase for ATP synthesis, the bloodstream form relies on ATP hydrolysis by F(1)F(o) ATP synthase to maintain its mitochondrial membrane potential. In Trypanosoma brucei brucei, this protein is ATP synthase subunit epsilon, mitochondrial.